We begin with the raw amino-acid sequence, 298 residues long: ATP synthase gamma chain (298 aa).

Belongs to the ATPase gamma chain family. As to quaternary structure, F-type ATPases have 2 components, CF(1) - the catalytic core - and CF(0) - the membrane proton channel. CF(1) has five subunits: alpha(3), beta(3), gamma(1), delta(1), epsilon(1). CF(0) has three main subunits: a, b and c.

It localises to the cell inner membrane. Functionally, produces ATP from ADP in the presence of a proton gradient across the membrane. The gamma chain is believed to be important in regulating ATPase activity and the flow of protons through the CF(0) complex. The polypeptide is ATP synthase gamma chain (Francisella tularensis subsp. mediasiatica (strain FSC147)).